The sequence spans 38 residues: Toxin Bot33 (38 aa).

3 cysteine pairs are disulfide-bonded: cysteine 8–cysteine 28, cysteine 14–cysteine 33, and cysteine 18–cysteine 35.

The protein belongs to the short scorpion toxin superfamily. Potassium channel inhibitor family. Expressed by the venom gland.

It is found in the secreted. Functionally, a probable toxin that has no activity on the tested mammalian voltage-gated potassium channels (when tested at 1 uM) and is not toxic to mice. It resembles alpha toxins that block voltage-gated potassium channels. The chain is Toxin Bot33 from Buthus occitanus tunetanus (Common European scorpion).